The chain runs to 968 residues: Glycine dehydrogenase (decarboxylating) (968 aa).

Lys712 is modified (N6-(pyridoxal phosphate)lysine).

This sequence belongs to the GcvP family. In terms of assembly, the glycine cleavage system is composed of four proteins: P, T, L and H. Pyridoxal 5'-phosphate serves as cofactor.

The catalysed reaction is N(6)-[(R)-lipoyl]-L-lysyl-[glycine-cleavage complex H protein] + glycine + H(+) = N(6)-[(R)-S(8)-aminomethyldihydrolipoyl]-L-lysyl-[glycine-cleavage complex H protein] + CO2. Its function is as follows. The glycine cleavage system catalyzes the degradation of glycine. The P protein binds the alpha-amino group of glycine through its pyridoxal phosphate cofactor; CO(2) is released and the remaining methylamine moiety is then transferred to the lipoamide cofactor of the H protein. This is Glycine dehydrogenase (decarboxylating) from Prochlorococcus marinus (strain NATL2A).